We begin with the raw amino-acid sequence, 183 residues long: Cell division protein SepF (183 aa).

The segment at 13–58 (MHDDDDFDDDYEDYDDDFDEDYEDDKPSARKRLFTGSSKKDSVADE) is disordered. Residues 16-36 (DDDFDDDYEDYDDDFDEDYED) are compositionally biased toward acidic residues.

It belongs to the SepF family. Homodimer. Interacts with FtsZ.

It is found in the cytoplasm. Cell division protein that is part of the divisome complex and is recruited early to the Z-ring. Probably stimulates Z-ring formation, perhaps through the cross-linking of FtsZ protofilaments. Its function overlaps with FtsA. The sequence is that of Cell division protein SepF from Lachnospira eligens (strain ATCC 27750 / DSM 3376 / VPI C15-48 / C15-B4) (Eubacterium eligens).